A 105-amino-acid chain; its full sequence is Malonate decarboxylase acyl carrier protein (105 aa).

Ser28 is modified (O-(phosphoribosyl dephospho-coenzyme A)serine).

Belongs to the MdcC family. Covalently binds the prosthetic group of malonate decarboxylase.

It is found in the cytoplasm. Its function is as follows. Subunit of malonate decarboxylase, it is an acyl carrier protein to which acetyl and malonyl thioester residues are bound via a 2'-(5''-phosphoribosyl)-3'-dephospho-CoA prosthetic group and turn over during the catalytic mechanism. The sequence is that of Malonate decarboxylase acyl carrier protein from Xanthomonas campestris pv. campestris (strain 8004).